We begin with the raw amino-acid sequence, 101 residues long: Large ribosomal subunit protein bL21 (101 aa).

The protein belongs to the bacterial ribosomal protein bL21 family. As to quaternary structure, part of the 50S ribosomal subunit. Contacts protein L20.

Its function is as follows. This protein binds to 23S rRNA in the presence of protein L20. In Corynebacterium diphtheriae (strain ATCC 700971 / NCTC 13129 / Biotype gravis), this protein is Large ribosomal subunit protein bL21.